Reading from the N-terminus, the 416-residue chain is UDP-N-acetylglucosamine 1-carboxyvinyltransferase (416 aa).

22-23 (KN) lines the phosphoenolpyruvate pocket. A UDP-N-acetyl-alpha-D-glucosamine-binding site is contributed by R92. Residue C116 is the Proton donor of the active site. C116 is subject to 2-(S-cysteinyl)pyruvic acid O-phosphothioketal. UDP-N-acetyl-alpha-D-glucosamine contacts are provided by residues 121–125 (RPVDQ), D304, and I326.

This sequence belongs to the EPSP synthase family. MurA subfamily.

The protein localises to the cytoplasm. It carries out the reaction phosphoenolpyruvate + UDP-N-acetyl-alpha-D-glucosamine = UDP-N-acetyl-3-O-(1-carboxyvinyl)-alpha-D-glucosamine + phosphate. The protein operates within cell wall biogenesis; peptidoglycan biosynthesis. In terms of biological role, cell wall formation. Adds enolpyruvyl to UDP-N-acetylglucosamine. The chain is UDP-N-acetylglucosamine 1-carboxyvinyltransferase from Janthinobacterium sp. (strain Marseille) (Minibacterium massiliensis).